We begin with the raw amino-acid sequence, 910 residues long: Protein translocase subunit SecA (910 aa).

Residues glutamine 89, 107–111, and aspartate 496 each bind ATP; that span reads GEGKT. Residues 873–910 are disordered; the sequence is QEFSGGNLNRSQSNGSSVTVTTSSGGGTERKTSRRRKR. The span at 876-886 shows a compositional bias: polar residues; sequence SGGNLNRSQSN.

It belongs to the SecA family. Monomer and homodimer. Part of the essential Sec protein translocation apparatus which comprises SecA, SecYEG and auxiliary proteins SecDF. Other proteins may also be involved.

Its subcellular location is the cell inner membrane. The protein resides in the cytoplasm. It catalyses the reaction ATP + H2O + cellular proteinSide 1 = ADP + phosphate + cellular proteinSide 2.. In terms of biological role, part of the Sec protein translocase complex. Interacts with the SecYEG preprotein conducting channel. Has a central role in coupling the hydrolysis of ATP to the transfer of proteins into and across the cell membrane, serving as an ATP-driven molecular motor driving the stepwise translocation of polypeptide chains across the membrane. This Leptospira interrogans serogroup Icterohaemorrhagiae serovar copenhageni (strain Fiocruz L1-130) protein is Protein translocase subunit SecA.